Here is a 233-residue protein sequence, read N- to C-terminus: Uracil-DNA glycosylase (233 aa).

Asp70 acts as the Proton acceptor in catalysis.

It belongs to the uracil-DNA glycosylase (UDG) superfamily. UNG family.

Its subcellular location is the cytoplasm. The enzyme catalyses Hydrolyzes single-stranded DNA or mismatched double-stranded DNA and polynucleotides, releasing free uracil.. Its function is as follows. Excises uracil residues from the DNA which can arise as a result of misincorporation of dUMP residues by DNA polymerase or due to deamination of cytosine. This is Uracil-DNA glycosylase from Helicobacter pylori (strain P12).